The primary structure comprises 99 residues: NADH-quinone oxidoreductase subunit K (99 aa).

3 helical membrane passes run 3 to 23, 28 to 48, and 62 to 82; these read PENY…GVLL, IVVF…FVTF, and FFTM…IMII.

Belongs to the complex I subunit 4L family. As to quaternary structure, NDH-1 is composed of 14 different subunits. Subunits NuoA, H, J, K, L, M, N constitute the membrane sector of the complex.

It is found in the cell membrane. The enzyme catalyses a quinone + NADH + 5 H(+)(in) = a quinol + NAD(+) + 4 H(+)(out). Functionally, NDH-1 shuttles electrons from NADH, via FMN and iron-sulfur (Fe-S) centers, to quinones in the respiratory chain. The immediate electron acceptor for the enzyme in this species is believed to be a menaquinone. Couples the redox reaction to proton translocation (for every two electrons transferred, four hydrogen ions are translocated across the cytoplasmic membrane), and thus conserves the redox energy in a proton gradient. This is NADH-quinone oxidoreductase subunit K from Rhodococcus erythropolis (strain PR4 / NBRC 100887).